Here is a 461-residue protein sequence, read N- to C-terminus: Dihydrofolate reductase (461 aa).

The 215-residue stretch at 233–447 (DLTMIVAVSS…VEIEFELYGK (215 aa)) folds into the DHFR domain. NADP(+) is bound by residues Ala-239 and 246–252 (GIGKKNS). Substrate is bound at residue 260 to 265 (EMAYFA). 292–294 (RSC) serves as a coordination point for NADP(+). Substrate is bound at residue Arg-308. NADP(+) is bound by residues 314–316 (TRN) and 365–372 (GGSFLYGS).

This sequence belongs to the dihydrofolate reductase family.

The catalysed reaction is (6S)-5,6,7,8-tetrahydrofolate + NADP(+) = 7,8-dihydrofolate + NADPH + H(+). The protein operates within cofactor biosynthesis; tetrahydrofolate biosynthesis; 5,6,7,8-tetrahydrofolate from 7,8-dihydrofolate: step 1/1. Its function is as follows. Key enzyme in folate metabolism. Catalyzes an essential reaction for de novo glycine and purine synthesis, and for DNA precursor synthesis. This chain is Dihydrofolate reductase (dfr1), found in Schizosaccharomyces pombe (strain 972 / ATCC 24843) (Fission yeast).